An 891-amino-acid chain; its full sequence is Aconitate hydratase A (891 aa).

[4Fe-4S] cluster-binding residues include cysteine 435, cysteine 501, and cysteine 504.

Belongs to the aconitase/IPM isomerase family. Monomer. [4Fe-4S] cluster serves as cofactor.

It carries out the reaction citrate = D-threo-isocitrate. The protein operates within carbohydrate metabolism; tricarboxylic acid cycle; isocitrate from oxaloacetate: step 2/2. Catalyzes the reversible isomerization of citrate to isocitrate via cis-aconitate. The apo form of AcnA functions as a RNA-binding regulatory protein which plays a role as a maintenance or survival enzyme during nutritional or oxidative stress. During oxidative stress inactive AcnA apo-enzyme without iron sulfur clusters binds the acnA mRNA 3' UTRs (untranslated regions), stabilizes acnA mRNA and increases AcnA synthesis, thus mediating a post-transcriptional positive autoregulatory switch. AcnA also enhances the stability of the sodA transcript. This Escherichia coli (strain K12) protein is Aconitate hydratase A.